Consider the following 25-residue polypeptide: Kunitz-type serine protease inhibitor RsTIS5 (25 aa).

The region spanning 1–25 (EAEPKPFNPVCYEPKEVGPCKAYVP) is the BPTI/Kunitz inhibitor domain.

Serine protease inhibitor. Inhibits trypsin, elastase and plasmin. Does not inhibit kallikrein. The chain is Kunitz-type serine protease inhibitor RsTIS5 from Rhipicephalus sanguineus (Brown dog tick).